The primary structure comprises 740 residues: Probable apyrase 7 (740 aa).

Residues 1–113 (MVFGRITELF…PSTRRKLIRA (113 aa)) are Cytoplasmic-facing. A helical membrane pass occupies residues 114–134 (VMIVMCLFLFAFLVYIVSMYI). Residues 135–581 (YTNWSRGASR…LKSYETLSMK (447 aa)) are Extracellular-facing. Asn-137 carries an N-linked (GlcNAc...) asparagine glycan. Position 147-157 (147-157 (VVFDCGSTGTR)) interacts with ATP. Asn-208 carries an N-linked (GlcNAc...) asparagine glycan. The active-site Proton acceptor is the Glu-284. 309–319 (GALDLGGSSLQ) provides a ligand contact to ATP. N-linked (GlcNAc...) asparagine glycans are attached at residues Asn-330, Asn-374, Asn-439, and Asn-484. The helical transmembrane segment at 582 to 602 (INPIALISILILSLLLLLCAL) threads the bilayer. Over 603-740 (SRVSNCLPRF…SLADSHMLKM (138 aa)) the chain is Cytoplasmic. Positions 706–740 (FWSSPRRSQMRLQSRRSQSREDLSSSLADSHMLKM) are disordered. A compositionally biased stretch (low complexity) spans 708–721 (SSPRRSQMRLQSRR).

This sequence belongs to the GDA1/CD39 NTPase family. The cofactor is Ca(2+). Detected in mature pollen grains. Also expressed in more diverse tissues such as roots, leaves, stems, pistils and sepals. More particularly expressed in the vascular bundle.

It is found in the membrane. It catalyses the reaction a ribonucleoside 5'-triphosphate + 2 H2O = a ribonucleoside 5'-phosphate + 2 phosphate + 2 H(+). Functionally, catalyzes the hydrolysis of phosphoanhydride bonds of nucleoside tri- and di-phosphates. Involved in the regulation of pollen and anther development. The sequence is that of Probable apyrase 7 (APY7) from Arabidopsis thaliana (Mouse-ear cress).